We begin with the raw amino-acid sequence, 261 residues long: Zinc import ATP-binding protein ZnuC (261 aa).

Positions 6 to 227 constitute an ABC transporter domain; it reads IQLNNIHLRF…PEYLKLFGKQ (222 aa). 38-45 contributes to the ATP binding site; that stretch reads GPNGAGKS.

Belongs to the ABC transporter superfamily. Zinc importer (TC 3.A.1.15.5) family. As to quaternary structure, the complex is composed of two ATP-binding proteins (ZnuC), two transmembrane proteins (ZnuB) and a solute-binding protein (ZnuA).

The protein resides in the cell inner membrane. It carries out the reaction Zn(2+)(out) + ATP(in) + H2O(in) = Zn(2+)(in) + ADP(in) + phosphate(in) + H(+)(in). Functionally, part of the ABC transporter complex ZnuABC involved in zinc import. Responsible for energy coupling to the transport system. In Saccharophagus degradans (strain 2-40 / ATCC 43961 / DSM 17024), this protein is Zinc import ATP-binding protein ZnuC.